Reading from the N-terminus, the 323-residue chain is Beta-ketoacyl-[acyl-carrier-protein] synthase III (323 aa).

Catalysis depends on residues Cys113 and His250. The interval 251-255 (QANRR) is ACP-binding. The active site involves Asn280.

Belongs to the thiolase-like superfamily. FabH family. As to quaternary structure, homodimer.

The protein resides in the cytoplasm. It carries out the reaction malonyl-[ACP] + acetyl-CoA + H(+) = 3-oxobutanoyl-[ACP] + CO2 + CoA. It participates in lipid metabolism; fatty acid biosynthesis. Its function is as follows. Catalyzes the condensation reaction of fatty acid synthesis by the addition to an acyl acceptor of two carbons from malonyl-ACP. Catalyzes the first condensation reaction which initiates fatty acid synthesis and may therefore play a role in governing the total rate of fatty acid production. Possesses both acetoacetyl-ACP synthase and acetyl transacylase activities. Its substrate specificity determines the biosynthesis of branched-chain and/or straight-chain of fatty acids. The sequence is that of Beta-ketoacyl-[acyl-carrier-protein] synthase III from Rhizobium meliloti (strain 1021) (Ensifer meliloti).